The chain runs to 260 residues: Putative serine protease 45 (260 aa).

The region spanning 1-234 (MTRHWPWEVS…YTKWIKKQMS (234 aa)) is the Peptidase S1 domain. C19 and C35 are oxidised to a cystine. H34 (charge relay system) is an active-site residue. N-linked (GlcNAc...) asparagine glycosylation is present at N55. D82 (charge relay system) is an active-site residue. Cystine bridges form between C116–C192, C151–C173, and C182–C210. S186 functions as the Charge relay system in the catalytic mechanism.

It belongs to the peptidase S1 family.

The chain is Putative serine protease 45 from Homo sapiens (Human).